Consider the following 689-residue polypeptide: Methionine--tRNA ligase (689 aa).

Residues 15–25 (PYANGPIHLGH) carry the 'HIGH' region motif. Zn(2+) contacts are provided by C146, C149, C159, and C162. The 'KMSKS' region motif lies at 332–336 (KMSKS). An ATP-binding site is contributed by K335. The tRNA-binding domain maps to 588 to 689 (DFAKIDLRIA…EGAQPGMRVK (102 aa)).

It belongs to the class-I aminoacyl-tRNA synthetase family. MetG type 1 subfamily. In terms of assembly, homodimer. Zn(2+) is required as a cofactor.

The protein localises to the cytoplasm. The catalysed reaction is tRNA(Met) + L-methionine + ATP = L-methionyl-tRNA(Met) + AMP + diphosphate. In terms of biological role, is required not only for elongation of protein synthesis but also for the initiation of all mRNA translation through initiator tRNA(fMet) aminoacylation. The chain is Methionine--tRNA ligase from Shewanella sp. (strain W3-18-1).